The sequence spans 154 residues: MRKIIIPIITILLIALDQLSKLWIVKHIELNQIKEFIPNIVSLTYLRNYGAAFSILQNQQWLFTLITIFVVCVAIIYLMKHINGSYWLLISLTLIISGGLGNFIDRLRLGYVVDMVHLDFINFAIFNVADSYLTIGIICLMIALWKEESNGNHN.

The next 3 membrane-spanning stretches (helical) occupy residues 4 to 24, 62 to 82, and 84 to 104; these read IIIP…KLWI, LFTL…MKHI, and GSYW…GNFI. Catalysis depends on residues D114 and D130. The helical transmembrane segment at 125–145 threads the bilayer; it reads IFNVADSYLTIGIICLMIALW.

It belongs to the peptidase A8 family.

The protein resides in the cell membrane. The enzyme catalyses Release of signal peptides from bacterial membrane prolipoproteins. Hydrolyzes -Xaa-Yaa-Zaa-|-(S,diacylglyceryl)Cys-, in which Xaa is hydrophobic (preferably Leu), and Yaa (Ala or Ser) and Zaa (Gly or Ala) have small, neutral side chains.. Its pathway is protein modification; lipoprotein biosynthesis (signal peptide cleavage). Functionally, this protein specifically catalyzes the removal of signal peptides from prolipoproteins. This is Lipoprotein signal peptidase from Streptococcus agalactiae serotype Ia (strain ATCC 27591 / A909 / CDC SS700).